The primary structure comprises 115 residues: Nucleoid-associated protein tlr0723 (115 aa).

This sequence belongs to the YbaB/EbfC family. As to quaternary structure, homodimer.

Its subcellular location is the cytoplasm. It localises to the nucleoid. Its function is as follows. Binds to DNA and alters its conformation. May be involved in regulation of gene expression, nucleoid organization and DNA protection. This is Nucleoid-associated protein tlr0723 from Thermosynechococcus vestitus (strain NIES-2133 / IAM M-273 / BP-1).